A 169-amino-acid polypeptide reads, in one-letter code: MVAVRWGRKGLRSQRRKYSRIAYKPPSSKVVSHVESVLNKRDVTGAEVKPFADGSRYSMKKVMLIATLTMAPGELVNYLIVKSNSPIANWSSSFSNPSLMVKESVQDTVTIVGGGKLESSGTAGKDVTKSFRKFVKLGSGISQTQHLYLIIYSSDAMKITLETRMYIDV.

This sequence belongs to the nanoviridae capsid protein family.

It localises to the virion. The sequence is that of Capsid protein (DNA-S) from Subterranean clover stunt virus (strain F) (SCSV).